The chain runs to 652 residues: Bifunctional protein ThiO/ThiG (652 aa).

The tract at residues 1 to 366 is thiO; it reads MTRDIVIIGG…HYSRFQKQAS (366 aa). FAD contacts are provided by residues 5–19 and 44–46; these read IVII…AIAV and AGM. Position 52 (Glu-52) interacts with glycine. Residue Val-173 participates in FAD binding. 2 residues coordinate glycine: Arg-301 and Arg-327. 325–331 contacts FAD; sequence HYRNGIL. The segment at 393 to 652 is thiG; that stretch reads SLIIAGKSFH…ASSPVTGTIS (260 aa). Lys-494 acts as the Schiff-base intermediate with DXP in catalysis. 1-deoxy-D-xylulose 5-phosphate contacts are provided by residues Gly-555, 581–582, and 603–604; these read AG and NS.

In the N-terminal section; belongs to the DAO family. ThiO subfamily. It in the C-terminal section; belongs to the ThiG family. In terms of assembly, interacts with ThiH and ThiS. It depends on FAD as a cofactor.

Its subcellular location is the cytoplasm. The enzyme catalyses glycine + O2 + H2O = glyoxylate + H2O2 + NH4(+). It carries out the reaction [ThiS sulfur-carrier protein]-C-terminal-Gly-aminoethanethioate + 2-iminoacetate + 1-deoxy-D-xylulose 5-phosphate = [ThiS sulfur-carrier protein]-C-terminal Gly-Gly + 2-[(2R,5Z)-2-carboxy-4-methylthiazol-5(2H)-ylidene]ethyl phosphate + 2 H2O + H(+). Its pathway is cofactor biosynthesis; thiamine diphosphate biosynthesis. Its function is as follows. Catalyzes the FAD-dependent oxidative deamination of glycine. Is essential for thiamine biosynthesis since the oxidation of glycine catalyzed by ThiO generates the glycine imine intermediate (dehydroglycine) required for the biosynthesis of the thiazole ring of thiamine pyrophosphate. In terms of biological role, catalyzes the rearrangement of 1-deoxy-D-xylulose 5-phosphate (DXP) to produce the thiazole phosphate moiety of thiamine. Sulfur is provided by the thiocarboxylate moiety of the carrier protein ThiS. In vitro, sulfur can be provided by H(2)S. The protein is Bifunctional protein ThiO/ThiG (thiO/thiG) of Trichormus variabilis (strain ATCC 29413 / PCC 7937) (Anabaena variabilis).